Reading from the N-terminus, the 479-residue chain is NADH-quinone oxidoreductase subunit N 2 (479 aa).

14 helical membrane passes run 4–24 (FVSFLPELVLLAGALALFVVT), 43–63 (GVLVAALATVNHSAVLFSGAY), 67–87 (AFSQLLKIAIAFGYLCVGILS), 99–119 (PEYFLFLALSMTGLLALVSSI), 121–141 (VITLIIALELSSFPLYLMVAM), 159–179 (IMFGIAANGVMFFGFGYLYGL), 201–221 (AVTGLALTLAGFLYKLAVFPF), 239–259 (LIASLPKLGAVAVLVRFVSLA), 267–287 (ATLLTCLAIASMVYGNLIALV), 294–314 (LLGFSGIAHAGYVMVGFVAMD), 318–338 (FASALYYIAGYMLMVLACFVV), 364–384 (LAVTLIVGVFALAGVPPFVGF), 401–421 (ALVVLTVINSAIAIYYYLQIV), and 444–464 (ALCVLLIVAITLLGVAPAFTI).

This sequence belongs to the complex I subunit 2 family. As to quaternary structure, NDH-1 is composed of 14 different subunits. Subunits NuoA, H, J, K, L, M, N constitute the membrane sector of the complex.

Its subcellular location is the cell inner membrane. The enzyme catalyses a quinone + NADH + 5 H(+)(in) = a quinol + NAD(+) + 4 H(+)(out). NDH-1 shuttles electrons from NADH, via FMN and iron-sulfur (Fe-S) centers, to quinones in the respiratory chain. The immediate electron acceptor for the enzyme in this species is believed to be ubiquinone. Couples the redox reaction to proton translocation (for every two electrons transferred, four hydrogen ions are translocated across the cytoplasmic membrane), and thus conserves the redox energy in a proton gradient. The chain is NADH-quinone oxidoreductase subunit N 2 from Opitutus terrae (strain DSM 11246 / JCM 15787 / PB90-1).